A 176-amino-acid polypeptide reads, in one-letter code: Isopentenyl-diphosphate Delta-isomerase (176 aa).

The Mn(2+) site is built by His-23 and His-29. The region spanning 27-161 (LRHLAISVFV…PERFTPWLKI (135 aa)) is the Nudix hydrolase domain. Cys-63 is an active-site residue. Mg(2+) is bound at residue Cys-63. His-65 serves as a coordination point for Mn(2+). Glu-83 contributes to the Mg(2+) binding site. Residues Glu-109 and Glu-111 each coordinate Mn(2+). Glu-111 is an active-site residue.

This sequence belongs to the IPP isomerase type 1 family. It depends on Mg(2+) as a cofactor. The cofactor is Mn(2+).

It localises to the cytoplasm. It carries out the reaction isopentenyl diphosphate = dimethylallyl diphosphate. It functions in the pathway isoprenoid biosynthesis; dimethylallyl diphosphate biosynthesis; dimethylallyl diphosphate from isopentenyl diphosphate: step 1/1. Its pathway is porphyrin-containing compound metabolism; chlorophyll biosynthesis. In terms of biological role, catalyzes the 1,3-allylic rearrangement of the homoallylic substrate isopentenyl (IPP) to its highly electrophilic allylic isomer, dimethylallyl diphosphate (DMAPP). The polypeptide is Isopentenyl-diphosphate Delta-isomerase (Rhodobacter capsulatus (strain ATCC BAA-309 / NBRC 16581 / SB1003)).